Here is a 289-residue protein sequence, read N- to C-terminus: Pantothenate synthetase (289 aa).

33–40 (MGYLHEGH) provides a ligand contact to ATP. The Proton donor role is filled by His40. Gln70 is a binding site for (R)-pantoate. Gln70 provides a ligand contact to beta-alanine. 157–160 (GEKD) is a binding site for ATP. Gln163 is a (R)-pantoate binding site. Residues Val186 and 194–197 (LSSR) each bind ATP.

Belongs to the pantothenate synthetase family. Homodimer.

Its subcellular location is the cytoplasm. It carries out the reaction (R)-pantoate + beta-alanine + ATP = (R)-pantothenate + AMP + diphosphate + H(+). Its pathway is cofactor biosynthesis; (R)-pantothenate biosynthesis; (R)-pantothenate from (R)-pantoate and beta-alanine: step 1/1. Catalyzes the condensation of pantoate with beta-alanine in an ATP-dependent reaction via a pantoyl-adenylate intermediate. The sequence is that of Pantothenate synthetase from Anaeromyxobacter dehalogenans (strain 2CP-C).